We begin with the raw amino-acid sequence, 846 residues long: Cap-specific mRNA (nucleoside-2'-O-)-methyltransferase 1 (846 aa).

Residues 1-81 (MKRKSDSEQQ…LPDTLAEGSS (81 aa)) are disordered. The Bipartite nuclear localization signal motif lies at 2–20 (KRKSDSEQQPSVQCRKKKR). A compositionally biased stretch (polar residues) spans 27-45 (NLSSTSDDDTQYSNHGTQE). One can recognise a G-patch domain in the interval 87 to 133 (YNSVSQKLMAKMGFREGEGLGKFGQGRKEIVETSKQKGRRGLGMVLK). Substrate-binding positions include 203 to 207 (KSAFD) and Arg-218. The RrmJ-type SAM-dependent 2'-O-MTase domain occupies 231–450 (FFLNRAAMKM…ERYVVCRGLK (220 aa)). Asn-234 contacts S-adenosyl-L-methionine. Lys-239 is a catalytic residue. S-adenosyl-L-methionine is bound by residues 277–283 (CAGPGGF) and 335–336 (DV). Asp-364 is an active-site residue. 374 to 376 (NIQ) is a substrate binding site. The active-site Proton acceptor is Lys-404. Asn-439 provides a ligand contact to substrate. In terms of domain architecture, WW spans 752-786 (KTINEPWSMAYSKSQKRKYFYNSKTKNSQFELPVE).

Its subcellular location is the nucleus. The catalysed reaction is a 5'-end (N(7)-methyl 5'-triphosphoguanosine)-ribonucleoside in mRNA + S-adenosyl-L-methionine = a 5'-end (N(7)-methyl 5'-triphosphoguanosine)-(2'-O-methyl-ribonucleoside) in mRNA + S-adenosyl-L-homocysteine + H(+). Its function is as follows. S-adenosyl-L-methionine-dependent methyltransferase that mediates mRNA cap1 2'-O-ribose methylation to the 5'-cap structure of mRNAs. Methylates the ribose of the first nucleotide of a m(7)GpppG-capped mRNA and small nuclear RNA (snRNA) to produce m(7)GpppRm (cap1). Displays a preference for cap0 transcripts. Cap1 modification is linked to higher levels of translation. May be involved in the interferon response pathway. This is Cap-specific mRNA (nucleoside-2'-O-)-methyltransferase 1 (cmtr1) from Xenopus laevis (African clawed frog).